Consider the following 503-residue polypeptide: Surface lipoprotein assembly modifier (503 aa).

Positions Met1–Ala34 are cleaved as a signal peptide. An N-terminal domain region spans residues Arg38–Asp220. The stretch at Ile136 to Tyr169 is one TPR repeat. The C-terminal probable beta barrel stretch occupies residues Ser221 to Phe503. A run of 14 beta stranded transmembrane segments spans residues Trp222–Lys232, Leu259–Ser270, Ala275–Gly285, Gly299–Ala308, Asp313–Lys322, Ile334–Arg343, Phe348–Arg358, Thr372–Pro382, Tyr387–Asp396, Arg410–Glu419, Leu424–Lys434, Met454–Arg463, Ile470–Asn479, and Asn493–Phe503.

The protein belongs to the Slam family.

The protein localises to the cell outer membrane. Required for correct export to the cell surface of some cell outer membrane lipoproteins (tested with TpbP) upon heterologous expression in E.coli and probably also in Moraxella. The chain is Surface lipoprotein assembly modifier from Moraxella catarrhalis (Branhamella catarrhalis).